The following is a 228-amino-acid chain: Ribonuclease HII (228 aa).

One can recognise an RNase H type-2 domain in the interval 1–210; that stretch reads MKIAGIDEAG…LKKIAEKVES (210 aa). Residues Asp7, Glu8, and Asp105 each coordinate a divalent metal cation.

It belongs to the RNase HII family. Monomer. Requires Mn(2+) as cofactor. The cofactor is Mg(2+).

The protein resides in the cytoplasm. The enzyme catalyses Endonucleolytic cleavage to 5'-phosphomonoester.. Functionally, endonuclease that specifically degrades the RNA of RNA-DNA hybrids. In Thermococcus kodakarensis (strain ATCC BAA-918 / JCM 12380 / KOD1) (Pyrococcus kodakaraensis (strain KOD1)), this protein is Ribonuclease HII (rnhB).